Here is a 310-residue protein sequence, read N- to C-terminus: Homoserine kinase (310 aa).

91 to 101 serves as a coordination point for ATP; the sequence is PIGSGLGSSAC.

It belongs to the GHMP kinase family. Homoserine kinase subfamily.

It is found in the cytoplasm. It catalyses the reaction L-homoserine + ATP = O-phospho-L-homoserine + ADP + H(+). It participates in amino-acid biosynthesis; L-threonine biosynthesis; L-threonine from L-aspartate: step 4/5. In terms of biological role, catalyzes the ATP-dependent phosphorylation of L-homoserine to L-homoserine phosphate. This chain is Homoserine kinase, found in Escherichia coli (strain SMS-3-5 / SECEC).